The primary structure comprises 582 residues: Semenogelin-2 (582 aa).

The N-terminal stretch at 1-23 (MKSIILFVLSLLLILEKQAAVMG) is a signal peptide. Disordered regions lie at residues 25-62 (KGGSKGQLSSGSSRFPHRHRSQHYSGQKDKQHTESKGS), 91-190 (HKTT…QGGS), and 272-553 (NLNQ…FSGA). Basic and acidic residues predominate over residues 50 to 59 (GQKDKQHTES). Residues 92–134 (KTTKSKQHLRRHQRLLNYKQKGRGRVKPKRHFHLIVIHRKGGQ) are compositionally biased toward basic residues. Composition is skewed to polar residues over residues 137 to 161 (HGTQNPSQDQGNSPSGKGISSQYSN) and 174 to 190 (EQASASGAQKGRTQGGS). Positions 293 to 305 (TEERQPNHEEKSV) are enriched in basic and acidic residues. Residues 325-335 (KSQNQVTIPSQ) are compositionally biased toward polar residues. A compositionally biased stretch (basic and acidic residues) spans 336-345 (DQEHGHKENK). Over residues 385–395 (KSQNQVAIPSQ) the composition is skewed to polar residues. The span at 396–405 (DQEHGHKENK) shows a compositional bias: basic and acidic residues. Residues 445–455 (KSQNQVTIPSQ) show a composition bias toward polar residues. A compositionally biased stretch (basic and acidic residues) spans 456–465 (DQEHGHKENK). Composition is skewed to polar residues over residues 487 to 498 (KDVSQSSLSFQT) and 506 to 529 (SQIQTPNPNQGQWSGQNAKGNSGK). Basic and acidic residues predominate over residues 530-546 (SADRKQDLLSHEQEGRY).

This sequence belongs to the semenogelin family. In terms of assembly, interacts with SERPINA5.

The protein resides in the secreted. Participates in the formation of a gel matrix (sperm coagulum) entrapping the accessory gland secretions and ejaculated spermatozoa. This chain is Semenogelin-2 (SEMG2), found in Macaca fascicularis (Crab-eating macaque).